The sequence spans 447 residues: Putative branched-chain amino acid carrier protein SE_1090 (447 aa).

12 helical membrane passes run 5–25, 40–60, 74–94, 114–134, 143–163, 193–213, 229–249, 290–310, 317–337, 350–370, 382–402, and 417–437; these read TWII…LIFP, ILAF…VGAL, PRFS…LFAI, GNLA…YLCL, IGSL…IKGF, GYLT…VNAI, IIAG…LGYI, LLGI…IVSV, ILPK…SFIL, VPVL…ILIA, IPLI…QGWI, and LEWF…SYFV.

It belongs to the branched chain amino acid transporter family.

Its subcellular location is the cell membrane. Its function is as follows. Component of the transport system for branched-chain amino acids (leucine, isoleucine and valine), which is coupled to a proton motive force. This Staphylococcus epidermidis (strain ATCC 12228 / FDA PCI 1200) protein is Putative branched-chain amino acid carrier protein SE_1090.